A 388-amino-acid polypeptide reads, in one-letter code: S-adenosylmethionine synthase (388 aa).

His14 serves as a coordination point for ATP. A Mg(2+)-binding site is contributed by Asp16. Residue Glu42 coordinates K(+). Residues Glu55 and Gln98 each contribute to the L-methionine site. A flexible loop region spans residues 98-108 (QSAEISSAVDQ). ATP-binding positions include 166-168 (DGK), Asp242, 248-249 (RK), Ala265, and Lys269. Asp242 is an L-methionine binding site. L-methionine is bound at residue Lys273.

The protein belongs to the AdoMet synthase family. As to quaternary structure, homotetramer; dimer of dimers. Mg(2+) is required as a cofactor. K(+) serves as cofactor.

It localises to the cytoplasm. The enzyme catalyses L-methionine + ATP + H2O = S-adenosyl-L-methionine + phosphate + diphosphate. The protein operates within amino-acid biosynthesis; S-adenosyl-L-methionine biosynthesis; S-adenosyl-L-methionine from L-methionine: step 1/1. In terms of biological role, catalyzes the formation of S-adenosylmethionine (AdoMet) from methionine and ATP. The overall synthetic reaction is composed of two sequential steps, AdoMet formation and the subsequent tripolyphosphate hydrolysis which occurs prior to release of AdoMet from the enzyme. This is S-adenosylmethionine synthase from Oenococcus oeni (strain ATCC BAA-331 / PSU-1).